Here is a 255-residue protein sequence, read N- to C-terminus: Post-GPI attachment to proteins factor 2 (255 aa).

The next 6 membrane-spanning stretches (helical) occupy residues 25-45 (LAAL…SLLF), 80-100 (LAIF…LEYY), 111-131 (LGIL…CLSF), 143-163 (NAFV…YLLN), 185-205 (LFLV…RHNA), and 209-229 (AGVY…NMGF).

This sequence belongs to the PGAP2 family.

The protein localises to the golgi apparatus membrane. It is found in the endoplasmic reticulum membrane. In terms of biological role, involved in the lipid remodeling steps of GPI-anchor maturation. Required for stable expression of GPI-anchored proteins at the cell surface. The protein is Post-GPI attachment to proteins factor 2 of Drosophila pseudoobscura pseudoobscura (Fruit fly).